A 32-amino-acid chain; its full sequence is Natriuretic peptide Coa_NP2 (32 aa).

Cys8 and Cys24 are joined by a disulfide.

It belongs to the natriuretic peptide family. Snake NP subfamily. As to expression, expressed by the venom gland.

The protein resides in the secreted. In terms of biological role, snake venom natriuretic peptide that exhibits hypotensive and vasorelaxant effects. Produces a dose-dependent hypotension in rats, followed by significant increases in concentrations of markers of nitric oxide (NO) formation measured in the plasma and vasorelaxation in a thoracic aortic ring bath. The peptide may exert its hypotensive action, at least in part, through stimulation of NO production. The vasorelaxant effect is endothelium-dependent and does not appear to be mediated by the natriuretic peptide receptor-A, as its action is not modified by isatin (a potent NPR1 antagonist). May act by activating the natriuretic peptide receptor-B (NPR2). This is Natriuretic peptide Coa_NP2 from Crotalus lutosus abyssus (Grand Canyon rattlesnake).